The following is a 390-amino-acid chain: L-serine phosphate decarboxylase Cj1436c (390 aa).

At K243 the chain carries N6-(pyridoxal phosphate)lysine.

This sequence belongs to the class-I pyridoxal-phosphate-dependent aminotransferase family. Requires pyridoxal 5'-phosphate as cofactor.

It carries out the reaction O-phospho-L-serine + H(+) = phosphoethanolamine + CO2. Its pathway is capsule biogenesis; capsule polysaccharide biosynthesis. Its function is as follows. Pyridoxal phosphate (PLP)-dependent decarboxylase involved in the biosynthesis of amidated D-glucuronic acid structures found on the capsular polysaccharide (CPS) of C.jejuni. Catalyzes the decarboxylation of L-serine phosphate to ethanolamine phosphate. Less active with L-threonine phosphate. No activity with L-serine, L-threonine, L-aspartate or L-glutamate. In Campylobacter jejuni subsp. jejuni serotype O:2 (strain ATCC 700819 / NCTC 11168), this protein is L-serine phosphate decarboxylase Cj1436c.